We begin with the raw amino-acid sequence, 307 residues long: Cytochrome c1, heme protein, mitochondrial (307 aa).

A mitochondrion-targeting transit peptide spans 1 to 56; the sequence is MFQFVKKKNEFLKFARLGSRAFTQNAQKTHSKGSNIALVSSSLLSVGMIALYYNVY. Topologically, residues 57–269 are mitochondrial intermembrane; the sequence is GPSLSAGTPK…EPELDIRKKM (213 aa). The Cytochrome c domain occupies 89–259; the sequence is ASLRRGFQVY…DVVNFLHWAS (171 aa). Heme c contacts are provided by Cys102, Cys105, His106, and Met225. A helical transmembrane segment spans residues 270–287; the sequence is GFQVITVLTILTALSMWY. Residues 288-307 are Mitochondrial matrix-facing; that stretch reads KRFKWTPIKNRKIFYQRPIK.

This sequence belongs to the cytochrome c family. As to quaternary structure, component of the ubiquinol-cytochrome c oxidoreductase (cytochrome b-c1 complex, complex III, CIII), a multisubunit enzyme composed of 3 respiratory subunits cytochrome b, cytochrome c1 and Rieske protein, 2 core protein subunits, and additional low-molecular weight protein subunits. The complex exists as an obligatory dimer and forms supercomplexes (SCs) in the inner mitochondrial membrane with cytochrome c oxidase (complex IV, CIV). It depends on heme c as a cofactor.

The protein localises to the mitochondrion inner membrane. It carries out the reaction a quinol + 2 Fe(III)-[cytochrome c](out) = a quinone + 2 Fe(II)-[cytochrome c](out) + 2 H(+)(out). Functionally, component of the ubiquinol-cytochrome c oxidoreductase, a multisubunit transmembrane complex that is part of the mitochondrial electron transport chain which drives oxidative phosphorylation. The respiratory chain contains 3 multisubunit complexes succinate dehydrogenase (complex II, CII), ubiquinol-cytochrome c oxidoreductase (cytochrome b-c1 complex, complex III, CIII) and cytochrome c oxidase (complex IV, CIV), that cooperate to transfer electrons derived from NADH and succinate to molecular oxygen, creating an electrochemical gradient over the inner membrane that drives transmembrane transport and the ATP synthase. The cytochrome b-c1 complex catalyzes electron transfer from ubiquinol to cytochrome c, linking this redox reaction to translocation of protons across the mitochondrial inner membrane, with protons being carried across the membrane as hydrogens on the quinol. In the process called Q cycle, 2 protons are consumed from the matrix, 4 protons are released into the intermembrane space and 2 electrons are passed to cytochrome c. Cytochrome c1 is a catalytic core subunit containing a c-type heme. It transfers electrons from the [2Fe-2S] iron-sulfur cluster of the Rieske protein to cytochrome c. This Schizosaccharomyces pombe (strain 972 / ATCC 24843) (Fission yeast) protein is Cytochrome c1, heme protein, mitochondrial (cyt1).